Consider the following 129-residue polypeptide: ALK and LTK ligand 1 (129 aa).

A signal peptide spans 1-27; the sequence is MRPLKPGAPLPALFLLALALSPHGAHG. Residues 24–63 form a disordered region; sequence GAHGRPRGRRGARVTDKEPKPLLFLPAAGAGRTPSGSRSA. Basic residues predominate over residues 25–35; the sequence is AHGRPRGRRGA. 2 cysteine pairs are disulfide-bonded: C90–C126 and C104–C113.

It belongs to the ALKAL family. As to expression, widely expressed with highest levels in thyroid and moderate levels in stomach, trachea, small intestine, prostate and brain.

Its subcellular location is the secreted. The protein localises to the cell membrane. In terms of biological role, cytokine that acts as a physiological ligand for receptor tyrosine kinase LTK, leading to its activation. Monomeric ALKAL1 binds to LTK, leading to LTK homodimerization and activation. In contrast to ALKAL2, does not act as a potent physiological ligand for ALK. The chain is ALK and LTK ligand 1 from Homo sapiens (Human).